Here is a 58-residue protein sequence, read N- to C-terminus: Small ribosomal subunit protein bS21 (58 aa).

It belongs to the bacterial ribosomal protein bS21 family.

This is Small ribosomal subunit protein bS21 from Prochlorococcus marinus (strain MIT 9515).